Consider the following 527-residue polypeptide: Phospholipase A1-Igamma3, chloroplastic (527 aa).

A chloroplast-targeting transit peptide spans 1-52 (MASLSLPITLKNPRFFSSSPQNIFKTQPQTLVLTTKFKTCSIICSSSCTSIS). The segment covering 55 to 65 (TTQQKQSNKQT) has biased composition (low complexity). The interval 55-82 (TTQQKQSNKQTHVSDNKREEKAEEEEEE) is disordered. Residues 66–75 (HVSDNKREEK) are compositionally biased toward basic and acidic residues. The GXSXG motif lies at 300–304 (GHSLG). Residue Ser302 is the Acyl-ester intermediate of the active site. Catalysis depends on charge relay system residues Asp366 and His423.

The protein belongs to the AB hydrolase superfamily. Lipase family. As to expression, highly expressed in flowers. Lower levels in seedlings, leaves and stems.

It is found in the plastid. The protein localises to the chloroplast. It carries out the reaction 1,2-dihexadecanoyl-sn-glycero-3-phosphocholine + H2O = 2-hexadecanoyl-sn-glycero-3-phosphocholine + hexadecanoate + H(+). The enzyme catalyses a 1,2-diacyl-3-O-(beta-D-galactosyl)-sn-glycerol + H2O = an acyl-3-O-(beta-D-galactosyl)-sn-glycerol + a fatty acid + H(+). It catalyses the reaction a 1,2-diacyl-3-O-[alpha-D-galactosyl-(1-&gt;6)-beta-D-galactosyl]-sn-glycerol + H2O = acyl-3-O-[alpha-D-galactosyl-(1-&gt;6)-beta-D-galactosyl]-sn-glycerol + a fatty acid + H(+). Functionally, acylhydrolase that catalyzes the hydrolysis of phosphatidylcholine at the sn-1 position. Moderate activity toward phosphatidylcholine (PC), monogalactosyldiacylglycerol (MGDG), digalactosyldiacylglycerol (DGDG) and triacylglycerol (TAG). The protein is Phospholipase A1-Igamma3, chloroplastic of Arabidopsis thaliana (Mouse-ear cress).